Reading from the N-terminus, the 684-residue chain is Gabija protein GajB (684 aa).

One can recognise a UvrD-like helicase ATP-binding domain in the interval 14–351 (EQKSINAIFN…IEVINKIRND (338 aa)). Residue 35–42 (SGAGAGKT) participates in ATP binding.

It belongs to the helicase family. Homodimer. Interacts with GajA; 2 GajB dimers dock at opposite sides of the GajA complex to form a 4:4 GajA-GajB assembly (GajAB). GajAB interacts with Bacillus phage Phi3T Gad1 protein; this interaction forms a 4:4:8 GajAB-Gad1 complex and leads to GajAB inhibition.

In terms of biological role, component of antiviral defense system Gabija type II, composed of GajA and GajB. Expression of Gabija type II in B.subtilis (strain BEST7003) confers resistance to phages phi105, and SpBeta. May be a helicase or contribute to GajA activation. The protein is Gabija protein GajB of Bacillus cereus (strain HuB5-5).